Here is a 339-residue protein sequence, read N- to C-terminus: MADLKPYIAKAASGEPLSLGDAKAAFDIMMSGQATPSQIGGFLMALRVRGETVPEIAGAVASMRSRMIPVIAPDDAMDIVGTGGDQSGSYNVSSCTAFVVAGAGVPVAKHGNRALSSRSGAADTLAALGINIEADADTIGRSISEAGLGFMFAPMHHSAMRHVGPSRVELGTRTIFNLLGPLSNPASVKRQLVGVFAPQWLEPLAHVLKELGSETAWVVYGDGLDEMTTAGTTQVAALENGQIRTFEITPEEVGLRRCSPAELKGGEAAENAKALLGVLEDKDSAYRDIVLLNSGAALVVAGKAENLKDGIAQAVQSIDSGAALAVLQKVIAVSNDKPA.

5-phospho-alpha-D-ribose 1-diphosphate contacts are provided by residues glycine 81, 84 to 85 (GD), serine 89, 91 to 94 (NVSS), 109 to 117 (KHGNRALSS), and alanine 121. Glycine 81 is an anthranilate binding site. Position 93 (serine 93) interacts with Mg(2+). Asparagine 112 is an anthranilate binding site. Arginine 167 serves as a coordination point for anthranilate. The Mg(2+) site is built by aspartate 225 and glutamate 226.

Belongs to the anthranilate phosphoribosyltransferase family. Homodimer. It depends on Mg(2+) as a cofactor.

It catalyses the reaction N-(5-phospho-beta-D-ribosyl)anthranilate + diphosphate = 5-phospho-alpha-D-ribose 1-diphosphate + anthranilate. The protein operates within amino-acid biosynthesis; L-tryptophan biosynthesis; L-tryptophan from chorismate: step 2/5. Functionally, catalyzes the transfer of the phosphoribosyl group of 5-phosphorylribose-1-pyrophosphate (PRPP) to anthranilate to yield N-(5'-phosphoribosyl)-anthranilate (PRA). The chain is Anthranilate phosphoribosyltransferase from Brucella suis (strain ATCC 23445 / NCTC 10510).